Here is a 1328-residue protein sequence, read N- to C-terminus: WASH complex subunit 2 (1328 aa).

Residues 1 to 219 (MNRTSPDSEQ…VGSDRGSIVD (219 aa)) form a sufficient for interaction with WASHC3, WASHC4 and WASHC5; required for interaction with WASHC1 region. 5 positions are modified to phosphoserine: Ser-157, Ser-159, Ser-204, Ser-205, and Ser-209. A compositionally biased stretch (low complexity) spans 201–213 (GELSSEEGSVGSD). Disordered stretches follow at residues 201-655 (GELS…KTNL) and 675-830 (KKTQ…PKST). Composition is skewed to acidic residues over residues 219–231 (DSED…ESDD) and 248–273 (SDEE…EDIE). Ser-283 carries the phosphoserine modification. The segment covering 288 to 323 (LAARIKGDVSNQRKEGHTDGKPQRTVKEKKERRTPA) has biased composition (basic and acidic residues). Phosphothreonine is present on Thr-321. The tract at residues 346 to 592 (SRGGLFSDRQ…QTSSLPPQSQ (247 aa)) is sufficient for interaction with CCDC93. Positions 347 to 1328 (RGGLFSDRQG…DDPLNAFGSQ (982 aa)) are interaction with VPS35. The LFa 1 motif lies at 357 to 367 (LFDDDDESDLF). Ser-384 and Ser-387 each carry phosphoserine. 2 short sequence motifs (LFa) span residues 440–455 (LFDD…DNFF) and 474–483 (IFDDDEGDLF). Residues 441–453 (FDDDDNDSDEDDN) show a composition bias toward acidic residues. Over residues 508-528 (TITLPSSKNPKLVSETKTQKG) the composition is skewed to polar residues. 2 consecutive short sequence motifs (LFa) follow at residues 529-540 (LFSDEEDSEDLF) and 564-575 (LFGDEDEEDNLF). Phosphoserine occurs at positions 531 and 536. Positions 539-556 (LFSSQSSSKTKSASVLSS) are enriched in low complexity. Residues 582-592 (KQTSSLPPQSQ) show a composition bias toward polar residues. 2 positions are modified to phosphoserine: Ser-610 and Ser-611. Over residues 627–638 (ASERKSKGERWD) the composition is skewed to basic and acidic residues. Short sequence motifs (LFa) lie at residues 655-667 (LFEE…VDLF) and 683-695 (LFED…SSLF). Residues 690–699 (SGSSLFSLPP) show a composition bias toward polar residues. 5 positions are modified to phosphoserine: Ser-720, Ser-744, Ser-749, Ser-780, and Ser-795. The span at 797 to 808 (FDEDEDKVEDDS) shows a compositional bias: acidic residues. Short sequence motifs (LFa) lie at residues 832 to 840 (VFQDEELLF) and 849 to 855 (DPDVDLF). Disordered stretches follow at residues 863–940 (LSMP…EPSS) and 991–1088 (PTLP…AMAV). Residues Ser-867 and Ser-870 each carry the phosphoserine modification. An LFa 10 motif is present at residues 871–881 (LFGDDDDDDLF). Basic and acidic residues predominate over residues 894 to 919 (PEKKGTLRKDHKPPELTEGSKEKSTW). The segment at 925–1328 (QDSSGLTPFK…DDPLNAFGSQ (404 aa)) is interaction with phospholipids. The span at 1016–1034 (NKGRVKVRGKRRPQTRAAR) shows a compositional bias: basic residues. A required for interaction with F-actin-capping protein subunit alpha (CAPZA1 or CAPZA2 or CAPZA3) region spans residues 1017–1035 (KGRVKVRGKRRPQTRAARR). 4 positions are modified to phosphoserine: Ser-1042, Ser-1060, Ser-1077, and Ser-1102. Positions 1115–1210 (AHLFDSGDIF…KKNQWKSDSH (96 aa)) are disordered. 3 consecutive short sequence motifs (LFa) follow at residues 1117-1124 (LFDSGDIF), 1157-1171 (VFPD…DDLF), and 1187-1195 (LLEDEEDLF). Ser-1162 and Ser-1165 each carry phosphoserine. Residues 1196–1210 (ADQKGKKNQWKSDSH) are compositionally biased toward basic and acidic residues. 3 short sequence motifs (LFa) span residues 1220–1226 (IFEDDIF), 1249–1257 (LFDDNIDIF), and 1277–1286 (MFDDDTDDIF). The interval 1289 to 1310 (GLQAKASKPKSQSAEAVSELRS) is disordered. Residues 1317 to 1325 (IFDDPLNAF) carry the LFa 17 motif. Ser-1327 is modified (phosphoserine).

It belongs to the FAM21 family. Component of the WASH core complex also described as WASH regulatory complex (SHRC) composed of WASHC1, WASHC2, WASHC3, WASHC4 and WASHC5; in the complex interacts (via N-terminus) directly with WASHC1. The WASH core complex associates with the F-actin-capping protein dimer (formed by CAPZA1, CAPZA2 or CAPZA3 and CAPZB) in a transient or substoichiometric manner which was initially described as WASH complex. Interacts with VPS35; mediates the association with the retromer CSC complex. Interacts with FKBP15. Interacts with CCDC93, CCDC22, VPS35L; indicative for an association of the WASH core complex with the CCC and retriever complexes. Directly interacts with TBC1D23.

It is found in the early endosome membrane. It localises to the cell membrane. Acts as a component of the WASH core complex that functions as a nucleation-promoting factor (NPF) at the surface of endosomes, where it recruits and activates the Arp2/3 complex to induce actin polymerization, playing a key role in the fission of tubules that serve as transport intermediates during endosome sorting. Mediates the recruitment of the WASH core complex to endosome membranes via binding to phospholipids and VPS35 of the retromer CSC. Mediates the recruitment of the F-actin-capping protein dimer to the WASH core complex probably promoting localized F-actin polymerization needed for vesicle scission. Via its C-terminus binds various phospholipids, most strongly phosphatidylinositol 4-phosphate (PtdIns-(4)P), phosphatidylinositol 5-phosphate (PtdIns-(5)P) and phosphatidylinositol 3,5-bisphosphate (PtdIns-(3,5)P2). Involved in the endosome-to-plasma membrane trafficking and recycling of SNX27-retromer-dependent cargo proteins, such as GLUT1. Required for the association of DNAJC13, ENTR1, ANKRD50 with retromer CSC subunit VPS35. Required for the endosomal recruitment of CCC and retriever complexes subunits COMMD1 and CCDC93 as well as the retrievere complex subunit VPS35L. In Rattus norvegicus (Rat), this protein is WASH complex subunit 2.